The following is a 312-amino-acid chain: Small ribosomal subunit protein uS2 (312 aa).

The segment at 232–312 is disordered; the sequence is RASGAAERDE…AAPEGEAAAE (81 aa). A compositionally biased stretch (basic and acidic residues) spans 245-284; that stretch reads REGRDDRGDRRDDRRGPRRGDRRDDRRDRGGDRGGDRRGP. Low complexity predominate over residues 291-312; that stretch reads AAPVASAEPAAEAAPEGEAAAE.

The protein belongs to the universal ribosomal protein uS2 family.

This chain is Small ribosomal subunit protein uS2, found in Myxococcus xanthus (strain DK1622).